The chain runs to 802 residues: MYRSTKGASKARRDQINAEIRNLKELLPLAEADKVRLSYLHIMSLACIYTRKGVFFAGGTPLAGPTGLLSAQELEDIVAALPGFLLVFTAEGKLLYLSESVSEHLGHSMVDLVAQGDSIYDIIDPADHLTVRQQLTMPSALDADRLFRCRFNTSKSLRRQSAGNKLVLIRGRFHAHPPGAYWAGNPVFTAFCAPLEPRPRPGPGPGPGPGPASLFLAMFQSRHAKDLALLDISESVLIYLGFERSELLCKSWYGLLHPEDLAHASSQHYRLLAENGDIQAEMVVRLQAKHGGWTWIYCMLYSDGPEGPITANNYPISDTEAWSLRQQLNSENTQAAYVLGTPAVLPSFSENVFSQEHCSNPLFTPALGTPRSASFPRAPELGVISTSEELAQPSKELDFSYLPFPARPEPSLQADLSKDLVCTPPYTPHQPGGCAFLFSLHEPFQTHLPPPSSSLQEQLTPSTVTFSEQLTPSSATFPDPLTSSLQGQLTESSARSFEEQLTPCTSTFPDQLLPSTATFPEPLGSPTHEQLTPPSTAFQAHLNSPSQTFPEQLSPNPTKTYFAQEGCSFLYEKLPPSPSSPGNGDCTLLALAQLRGPLSVDVPLVPEGLLTPEASPVKQSFFHYTEKEQNEIDRLIQQISQLAQGMDRPFSAEAGTGGLEPLGGLEPLNPNLSLSGAGPPVLSLDLKPWKCQELDFLVDPDNLFLEETPVEDIFMDLSTPDPNGEWGSGDPEAEVPGGTLSPCNNLSPEDHSFLEDLATYETAFETGVSTFPYEGFADELHQLQSQVQDSFHEDGSGGEPTF.

The segment at 1-13 (MYRSTKGASKARR) is basic motif; degenerate. One can recognise a bHLH domain in the interval 1–53 (MYRSTKGASKARRDQINAEIRNLKELLPLAEADKVRLSYLHIMSLACIYTRKG). Positions 5-38 (TKGASKARRDQINAEIRNLKELLPLAEADKVRLS) form a coiled coil. Residues 14-53 (DQINAEIRNLKELLPLAEADKVRLSYLHIMSLACIYTRKG) are helix-loop-helix motif. PAS domains lie at 70–144 (SAQE…LDAD) and 203–275 (PGPG…LAEN). Residues 280 to 319 (AEMVVRLQAKHGGWTWIYCMLYSDGPEGPITANNYPISDT) enclose the PAC domain. Composition is skewed to polar residues over residues 472-495 (PSSA…SSAR), 502-518 (TPCT…STAT), and 527-555 (THEQ…QLSP). The segment at 472-555 (PSSATFPDPL…SQTFPEQLSP (84 aa)) is disordered. The stretch at 624–648 (YTEKEQNEIDRLIQQISQLAQGMDR) forms a coiled coil.

Efficient DNA binding requires dimerization with another bHLH protein. Heterodimer; forms a heterodimer with ARNT, ARNT2 or BMAL1. Ubiquitinated, leading to degradation by the proteosome. In terms of tissue distribution, specifically expressed in neurons. Expressed in the lateral nucleus of the amygdala (at protein level).

It localises to the nucleus. Transcription factor expressed in neurons of the brain that regulates the excitatory-inhibitory balance within neural circuits and is required for contextual memory in the hippocampus. Plays a key role in the structural and functional plasticity of neurons. Acts as an early-response transcription factor in both excitatory and inhibitory neurons, where it induces distinct but overlapping sets of late-response genes in these two types of neurons, allowing the synapses that form on inhibitory and excitatory neurons to be modified by neuronal activity in a manner specific to their function within a circuit, thereby facilitating appropriate circuit responses to sensory experience. In excitatory neurons, activates transcription of BDNF, which in turn controls the number of GABA-releasing synapses that form on excitatory neurons, thereby promoting an increased number of inhibitory synapses on excitatory neurons. In inhibitory neurons, regulates a distinct set of target genes that serve to increase excitatory input onto somatostatin neurons, probably resulting in enhanced feedback inhibition within cortical circuits. The excitatory and inhibitory balance in neurons affects a number of processes, such as short-term and long-term memory, acquisition of experience, fear memory, response to stress and social behavior. Acts as a regulator of dendritic spine development in olfactory bulb granule cells in a sensory-experience-dependent manner by regulating expression of MDM2. Efficient DNA binding requires dimerization with another bHLH protein, such as ARNT, ARNT2 or BMAL1. Can activate the CME (CNS midline enhancer) element. The protein is Neuronal PAS domain-containing protein 4 of Rattus norvegicus (Rat).